A 74-amino-acid polypeptide reads, in one-letter code: Omega-filistatoxin-Kh1a (74 aa).

In terms of processing, contains 6 disulfide bonds. As to expression, expressed by the venom gland.

It localises to the secreted. Functionally, potently blocks vertebrate calcium channels Cav1 and Cav2. Is the most active on Cav2.2/CACNA1B (from HEK) (IC(50)=2.3 nM), followed by Cav2.1/CACNA1A (IC(50)=4.3 nM), Cav2.2/CACNA1B (from oocyte) (IC(50)=14.4 nM), Cav1.2/CACNA1C (IC(50)=26.8 nM), and Cav2.3/CACNA1E (IC(50)=96.4 nM). The chain is Omega-filistatoxin-Kh1a from Kukulcania hibernalis (Southern house spider).